The sequence spans 93 residues: MARSLKKGPFVDEYIIKKVIAAKKAKDNKPIKTWSRRSTITPEMIGLTFNVHNGKSFIPVYVTEHHIGYKLGEFAPTRTFKGHRGSVQKKIGK.

This sequence belongs to the universal ribosomal protein uS19 family.

In terms of biological role, protein S19 forms a complex with S13 that binds strongly to the 16S ribosomal RNA. This Campylobacter hominis (strain ATCC BAA-381 / DSM 21671 / CCUG 45161 / LMG 19568 / NCTC 13146 / CH001A) protein is Small ribosomal subunit protein uS19.